The chain runs to 217 residues: 3,4-dihydroxy-2-butanone 4-phosphate synthase (217 aa).

Residues 37–38, D42, 150–154, and E174 contribute to the D-ribulose 5-phosphate site; these read RE and RRGHT. E38 is a Mg(2+) binding site. A Mg(2+)-binding site is contributed by H153.

This sequence belongs to the DHBP synthase family. In terms of assembly, homodimer. It depends on Mg(2+) as a cofactor. Requires Mn(2+) as cofactor.

The catalysed reaction is D-ribulose 5-phosphate = (2S)-2-hydroxy-3-oxobutyl phosphate + formate + H(+). The protein operates within cofactor biosynthesis; riboflavin biosynthesis; 2-hydroxy-3-oxobutyl phosphate from D-ribulose 5-phosphate: step 1/1. Catalyzes the conversion of D-ribulose 5-phosphate to formate and 3,4-dihydroxy-2-butanone 4-phosphate. The sequence is that of 3,4-dihydroxy-2-butanone 4-phosphate synthase from Shewanella baltica (strain OS223).